The chain runs to 341 residues: Ribosomal RNA small subunit methyltransferase H (341 aa).

S-adenosyl-L-methionine-binding positions include 47-49 (GGY), aspartate 64, phenylalanine 91, aspartate 109, and glutamine 116. Residues 292 to 319 (VAASEEEASRNPRARSAKLRAGVRTEAP) are disordered.

Belongs to the methyltransferase superfamily. RsmH family.

It localises to the cytoplasm. It carries out the reaction cytidine(1402) in 16S rRNA + S-adenosyl-L-methionine = N(4)-methylcytidine(1402) in 16S rRNA + S-adenosyl-L-homocysteine + H(+). Functionally, specifically methylates the N4 position of cytidine in position 1402 (C1402) of 16S rRNA. The polypeptide is Ribosomal RNA small subunit methyltransferase H (Rhizobium meliloti (strain 1021) (Ensifer meliloti)).